Reading from the N-terminus, the 549-residue chain is Manganese transporter SMF2 (549 aa).

Residues 1–23 form a disordered region; it reads MTSQEYEPIQWSDESQTNNDSVN. Positions 12–22 are enriched in polar residues; that stretch reads SDESQTNNDSV. The next 8 membrane-spanning stretches (helical) occupy residues 91–109, 130–147, 161–185, 196–214, 312–332, 350–372, 432–452, and 521–541; these read LLFSVLVSNFMAAFWQYLC, FGLNITLYILAEMAIIAT, ILFHIPLALGVILTVVDVLIVLLAY, IFEAFVSLLVVLTVVCFTV, LLISLFTVALFVNCAILIVSG, IYNLLCSTLSKGAGTVFVLALLF, ASQVVLSLLLPFVSAPLLYFT, and VLAIIVWLIISGLNFYMLLGF.

Belongs to the NRAMP family.

The protein localises to the vacuole lumen. It localises to the vesicle. The protein resides in the cell membrane. The catalysed reaction is Mn(2+)(in) = Mn(2+)(out). In terms of biological role, high-affinity manganese transporter involved in manganese uptake from the extracellular environment. This Saccharomyces cerevisiae (strain ATCC 204508 / S288c) (Baker's yeast) protein is Manganese transporter SMF2 (SMF2).